The sequence spans 126 residues: uncharacterized protein (126 aa).

The helical transmembrane segment at 5–25 (LIQHITSIFVFSFFFLFFFFS) threads the bilayer.

The protein localises to the membrane. This is an uncharacterized protein from Saccharomyces cerevisiae (strain ATCC 204508 / S288c) (Baker's yeast).